The chain runs to 318 residues: Pyrimidine-specific ribonucleoside hydrolase RihA (318 aa).

The active site involves His240.

The protein belongs to the IUNH family. RihA subfamily.

Functionally, hydrolyzes cytidine or uridine to ribose and cytosine or uracil, respectively. The protein is Pyrimidine-specific ribonucleoside hydrolase RihA of Shewanella oneidensis (strain ATCC 700550 / JCM 31522 / CIP 106686 / LMG 19005 / NCIMB 14063 / MR-1).